Here is a 253-residue protein sequence, read N- to C-terminus: uncharacterized protein (253 aa).

Positions alanine 30–alanine 236 constitute a BPL/LPL catalytic domain.

This is an uncharacterized protein from Cupriavidus necator (strain ATCC 17699 / DSM 428 / KCTC 22496 / NCIMB 10442 / H16 / Stanier 337) (Ralstonia eutropha).